We begin with the raw amino-acid sequence, 301 residues long: Growth-regulating factor 2 (301 aa).

The QLQ domain maps to 11-46 (LFTATQWQELEHQALIYKYMAAGAPVPPDLLLHLRH). 2 short sequence motifs (bipartite nuclear localization signal) span residues 83–102 (RRVE…KKWR) and 120–127 (RGKNRSRK). The WRC domain maps to 87–131 (DPEPGRCRRTDGKKWRCSREAYGESKYCEKHMHRGKNRSRKPVEM).

It belongs to the GRF family.

The protein localises to the nucleus. Transcription activator that plays a regulatory role in gibberellin-induced stem elongation. This Oryza sativa subsp. japonica (Rice) protein is Growth-regulating factor 2 (GRF2).